A 227-amino-acid polypeptide reads, in one-letter code: PKHD-type hydroxylase BamMC406_5004 (227 aa).

Residues 80–179 enclose the Fe2OG dioxygenase domain; it reads QVYPPLFNRY…RVASFFWVQS (100 aa). 3 residues coordinate Fe cation: histidine 98, aspartate 100, and histidine 160. Arginine 170 serves as a coordination point for 2-oxoglutarate.

The cofactor is Fe(2+). L-ascorbate is required as a cofactor.

The chain is PKHD-type hydroxylase BamMC406_5004 from Burkholderia ambifaria (strain MC40-6).